Consider the following 551-residue polypeptide: Cation/acetate symporter ActP (551 aa).

14 consecutive transmembrane segments (helical) span residues 8–28, 35–55, 78–98, 105–125, 151–171, 185–205, 208–228, 264–284, 305–325, 357–377, 406–426, 430–450, 465–485, and 496–516; these read ALAA…TGAV, WQAI…TYWA, GLAI…SALV, GLIY…LIAE, LSAC…MVGA, VAVV…GMLA, WVQI…AFMV, ISAL…PHIL, GFMG…IMLV, LFLG…VAGL, VSKI…ILFE, IAFM…PIIL, VGGW…PTIW, and FPYE…IWVF.

Belongs to the sodium:solute symporter (SSF) (TC 2.A.21) family.

The protein localises to the cell inner membrane. Its function is as follows. Transports acetate. The polypeptide is Cation/acetate symporter ActP (Klebsiella pneumoniae (strain 342)).